Reading from the N-terminus, the 225-residue chain is Orotate phosphoribosyltransferase (225 aa).

A 5-phospho-alpha-D-ribose 1-diphosphate-binding site is contributed by Lys32. An orotate-binding site is contributed by 40-41; that stretch reads FF. Residues 78–79, Arg104, Lys105, Lys108, His110, and 129–137 contribute to the 5-phospho-alpha-D-ribose 1-diphosphate site; these read YK and DDVISAGTS. Orotate-binding residues include Ser133 and Arg161.

Belongs to the purine/pyrimidine phosphoribosyltransferase family. PyrE subfamily. In terms of assembly, homodimer. Requires Mg(2+) as cofactor.

The enzyme catalyses orotidine 5'-phosphate + diphosphate = orotate + 5-phospho-alpha-D-ribose 1-diphosphate. It participates in pyrimidine metabolism; UMP biosynthesis via de novo pathway; UMP from orotate: step 1/2. Functionally, catalyzes the transfer of a ribosyl phosphate group from 5-phosphoribose 1-diphosphate to orotate, leading to the formation of orotidine monophosphate (OMP). The sequence is that of Orotate phosphoribosyltransferase from Cupriavidus metallidurans (strain ATCC 43123 / DSM 2839 / NBRC 102507 / CH34) (Ralstonia metallidurans).